The chain runs to 100 residues: UPF0125 protein CV_3462 (100 aa).

The protein belongs to the UPF0125 (RnfH) family.

The chain is UPF0125 protein CV_3462 from Chromobacterium violaceum (strain ATCC 12472 / DSM 30191 / JCM 1249 / CCUG 213 / NBRC 12614 / NCIMB 9131 / NCTC 9757 / MK).